A 95-amino-acid polypeptide reads, in one-letter code: Small ribosomal subunit protein bS18 (95 aa).

Belongs to the bacterial ribosomal protein bS18 family. Part of the 30S ribosomal subunit. Forms a tight heterodimer with protein bS6.

Binds as a heterodimer with protein bS6 to the central domain of the 16S rRNA, where it helps stabilize the platform of the 30S subunit. The sequence is that of Small ribosomal subunit protein bS18 from Rickettsia canadensis (strain McKiel).